The following is a 263-amino-acid chain: Microtubule-associated protein RP/EB family member 1 (263 aa).

The region spanning 14-116 (NLSRHDMLAW…FVQWFKKFFD (103 aa)) is the Calponin-homology (CH) domain. The segment at 150-182 (KPLGTGSAGPQRPIVAQRTPATPKGGTGMVKKA) is disordered. The 71-residue stretch at 180 to 250 (KKAAGDDESA…LYATDEGFVI (71 aa)) folds into the EB1 C-terminal domain.

The protein belongs to the MAPRE family.

Its subcellular location is the cytoplasm. It is found in the cytoskeleton. The protein localises to the microtubule organizing center. It localises to the centrosome. The protein resides in the golgi apparatus. Its subcellular location is the spindle. It is found in the spindle pole. In terms of biological role, plus-end tracking protein (+TIP) that binds to the plus-end of microtubules and regulates the dynamics of the microtubule cytoskeleton. Promotes cytoplasmic microtubule nucleation and elongation. Involved in mitotic spindle positioning by stabilizing microtubules and promoting dynamic connection between astral microtubules and the cortex during mitotic chromosome segregation. The protein is Microtubule-associated protein RP/EB family member 1 (MAPRE1) of Coturnix japonica (Japanese quail).